Here is a 166-residue protein sequence, read N- to C-terminus: Phospholipase A2 inhibitor clone 04 (166 aa).

Positions 1–19 are cleaved as a signal peptide; sequence MRLILLSSLLLLGIFLANG. The region spanning 46 to 161 is the C-type lectin domain; the sequence is LKDAFLTVHR…CDDNRLVVCE (116 aa). Intrachain disulfides connect C83-C160 and C138-C152. N-linked (GlcNAc...) asparagine glycosylation is present at N122.

The protein belongs to the alpha-type phospholipase A2 inhibitor family. As to quaternary structure, homotrimer; non-covalently linked. As to expression, expressed by the liver.

It localises to the secreted. This phospholipase A2 inhibitor binds directly phospholipase A2 in the presence or absence of calcium. This chain is Phospholipase A2 inhibitor clone 04, found in Bothrops moojeni (Lance-headed viper).